The following is a 333-amino-acid chain: Beta-ketoacyl-[acyl-carrier-protein] synthase III (333 aa).

Active-site residues include Cys-116 and His-258. The ACP-binding stretch occupies residues 259–263; it reads QANKR. The active site involves Asn-288.

It belongs to the thiolase-like superfamily. FabH family. In terms of assembly, homodimer.

It is found in the cytoplasm. The enzyme catalyses malonyl-[ACP] + acetyl-CoA + H(+) = 3-oxobutanoyl-[ACP] + CO2 + CoA. It functions in the pathway lipid metabolism; fatty acid biosynthesis. Catalyzes the condensation reaction of fatty acid synthesis by the addition to an acyl acceptor of two carbons from malonyl-ACP. Catalyzes the first condensation reaction which initiates fatty acid synthesis and may therefore play a role in governing the total rate of fatty acid production. Possesses both acetoacetyl-ACP synthase and acetyl transacylase activities. Its substrate specificity determines the biosynthesis of branched-chain and/or straight-chain of fatty acids. In Koribacter versatilis (strain Ellin345), this protein is Beta-ketoacyl-[acyl-carrier-protein] synthase III.